The primary structure comprises 295 residues: Mycothiol acetyltransferase (295 aa).

Glu-30 serves as a coordination point for 1D-myo-inositol 2-(L-cysteinylamino)-2-deoxy-alpha-D-glucopyranoside. 62–64 (LVV) contributes to the acetyl-CoA binding site. An N-acetyltransferase domain is found at 137-295 (VTVRAFRADS…DDDTHVQYRR (159 aa)). 3 residues coordinate 1D-myo-inositol 2-(L-cysteinylamino)-2-deoxy-alpha-D-glucopyranoside: Glu-165, Lys-209, and Glu-227. Acetyl-CoA-binding positions include 231–233 (VGI) and 238–244 (QGRGLGK). 1D-myo-inositol 2-(L-cysteinylamino)-2-deoxy-alpha-D-glucopyranoside is bound at residue Tyr-265.

Belongs to the acetyltransferase family. MshD subfamily. As to quaternary structure, monomer.

The enzyme catalyses 1D-myo-inositol 2-(L-cysteinylamino)-2-deoxy-alpha-D-glucopyranoside + acetyl-CoA = mycothiol + CoA + H(+). Its function is as follows. Catalyzes the transfer of acetyl from acetyl-CoA to desacetylmycothiol (Cys-GlcN-Ins) to form mycothiol. The chain is Mycothiol acetyltransferase from Nocardioides sp. (strain ATCC BAA-499 / JS614).